The chain runs to 95 residues: Co-chaperonin GroES (95 aa).

This sequence belongs to the GroES chaperonin family. As to quaternary structure, heptamer of 7 subunits arranged in a ring. Interacts with the chaperonin GroEL.

The protein localises to the cytoplasm. Together with the chaperonin GroEL, plays an essential role in assisting protein folding. The GroEL-GroES system forms a nano-cage that allows encapsulation of the non-native substrate proteins and provides a physical environment optimized to promote and accelerate protein folding. GroES binds to the apical surface of the GroEL ring, thereby capping the opening of the GroEL channel. The chain is Co-chaperonin GroES from Geobacter sulfurreducens (strain ATCC 51573 / DSM 12127 / PCA).